A 586-amino-acid chain; its full sequence is Zinc finger protein Eos (586 aa).

Disordered regions lie at residues methionine 1–phenylalanine 42 and glutamate 68–serine 98. Residues glutamine 25 to leucine 34 are compositionally biased toward basic and acidic residues. Residues serine 79–serine 98 show a composition bias toward polar residues. Lysine 100 is covalently cross-linked (Glycyl lysine isopeptide (Lys-Gly) (interchain with G-Cter in SUMO2)). At serine 105 the chain carries Phosphoserine. 4 consecutive C2H2-type zinc fingers follow at residues leucine 159–histidine 181, phenylalanine 187–histidine 209, phenylalanine 215–histidine 237, and tyrosine 248–histidine 271. The segment at alanine 281–glycine 586 is interaction with FOXP3. Lysine 335 bears the N6-acetyllysine mark. Residues arginine 413–arginine 490 form a disordered region. A CTBP-binding motif PEDLG motif is present at residues glycine 423–glycine 433. Over residues glutamine 476 to threonine 485 the composition is skewed to pro residues. Residue lysine 501 forms a Glycyl lysine isopeptide (Lys-Gly) (interchain with G-Cter in SUMO2) linkage. 2 C2H2-type zinc fingers span residues phenylalanine 531–histidine 553 and phenylalanine 559–histidine 583.

Belongs to the Ikaros C2H2-type zinc-finger protein family. As to quaternary structure, self-associates. Interacts with other family members; IKZF1, IKZF2, IKZF3 and IKZF5. Interacts with CTBP2, SPI1 and MITF. Interacts with FOXP3 and CTBP1. Expressed mainly in the brain. Up-regulated in long term cultured astrocytes. Down-regulated during osteoclast differentiation.

Its subcellular location is the nucleus. In terms of biological role, DNA-binding protein that binds to the 5'GGGAATRCC-3' Ikaros-binding sequence. Interacts with SPI1 and MITF to repress transcription of the CTSK and ACP5 promoters via recruitment of corepressors SIN3A and CTBP2. May be involved in the development of central and peripheral nervous systems. Essential for the inhibitory function of regulatory T-cells (Treg). Mediates FOXP3-mediated gene silencing in regulatory T-cells (Treg) via recruitment of corepressor CTBP1. The sequence is that of Zinc finger protein Eos (Ikzf4) from Mus musculus (Mouse).